A 106-amino-acid polypeptide reads, in one-letter code: Serine rich endogenous peptide 7 (106 aa).

An N-terminal signal peptide occupies residues 1 to 26 (MGKKCSSKFRQMLVLVLLLIVFTCLS). Basic and acidic residues-rich tracts occupy residues 46–56 (GIEDEGQERTH) and 65–77 (RSVE…EGRR). Residues 46–106 (GIEDEGQERT…GGGRIPVAAS (61 aa)) form a disordered region. 2 short sequence motifs (SCOOP motif) span residues 58 to 72 (LNSK…KTHH) and 86 to 100 (GIRA…GGGR). 2 short sequence motifs (sxS motif essential for MIK2 binding) span residues 64-66 (SRS) and 92-94 (SKS).

It belongs to the serine rich endogenous peptide (SCOOP) phytocytokine family. In terms of assembly, interacts with MIK2 (via extracellular leucine-rich repeat domain); this interaction triggers the formation of complex between MIK2 and the BAK1/SERK3 and SERK4 coreceptors, and subsequent BAK1 activation by phosphorylation. In terms of tissue distribution, mostly expressed in roots, and, to a lower extent, in seedlings shoots.

Its subcellular location is the cell membrane. It localises to the secreted. The protein resides in the extracellular space. It is found in the apoplast. In terms of biological role, brassicaceae-specific phytocytokine (plant endogenous peptide released into the apoplast) perceived by MIK2 in a BAK1/SERK3 and SERK4 coreceptors-dependent manner, that modulates various physiological and antimicrobial processes including growth prevention and reactive oxygen species (ROS) response regulation. The protein is Serine rich endogenous peptide 7 of Arabidopsis thaliana (Mouse-ear cress).